The chain runs to 243 residues: Pyridoxine 5'-phosphate synthase (243 aa).

3-amino-2-oxopropyl phosphate is bound at residue Asn-9. A 1-deoxy-D-xylulose 5-phosphate-binding site is contributed by 11-12 (DH). Arg-20 lines the 3-amino-2-oxopropyl phosphate pocket. The active-site Proton acceptor is His-45. 1-deoxy-D-xylulose 5-phosphate is bound by residues Arg-47 and His-52. The Proton acceptor role is filled by Glu-72. Residue Thr-102 participates in 1-deoxy-D-xylulose 5-phosphate binding. His-193 serves as the catalytic Proton donor. Residues Gly-194 and 215 to 216 (GH) contribute to the 3-amino-2-oxopropyl phosphate site.

It belongs to the PNP synthase family. Homooctamer; tetramer of dimers.

It is found in the cytoplasm. It carries out the reaction 3-amino-2-oxopropyl phosphate + 1-deoxy-D-xylulose 5-phosphate = pyridoxine 5'-phosphate + phosphate + 2 H2O + H(+). The protein operates within cofactor biosynthesis; pyridoxine 5'-phosphate biosynthesis; pyridoxine 5'-phosphate from D-erythrose 4-phosphate: step 5/5. Its function is as follows. Catalyzes the complicated ring closure reaction between the two acyclic compounds 1-deoxy-D-xylulose-5-phosphate (DXP) and 3-amino-2-oxopropyl phosphate (1-amino-acetone-3-phosphate or AAP) to form pyridoxine 5'-phosphate (PNP) and inorganic phosphate. This is Pyridoxine 5'-phosphate synthase from Salmonella typhi.